A 551-amino-acid chain; its full sequence is HTH-type transcriptional regulator SgrR (551 aa).

Residues Met-1 to Arg-116 enclose the HTH marR-type domain. The H-T-H motif DNA-binding region spans Leu-26 to Asp-49. The tract at residues Glu-163–Trp-492 is solute-binding.

Its function is as follows. Activates the small RNA gene sgrS under glucose-phosphate stress conditions as well as yfdZ. Represses its own transcription under both stress and non-stress conditions. Might act as a sensor of the intracellular accumulation of phosphoglucose by binding these molecules in its C-terminal solute-binding domain. The sequence is that of HTH-type transcriptional regulator SgrR from Escherichia coli O6:K15:H31 (strain 536 / UPEC).